The sequence spans 625 residues: DNA mismatch repair protein MutL (625 aa).

A disordered region spans residues 404-427 (PPPRNAPQSTGMPSMAGTGLPATS).

Belongs to the DNA mismatch repair MutL/HexB family.

This protein is involved in the repair of mismatches in DNA. It is required for dam-dependent methyl-directed DNA mismatch repair. May act as a 'molecular matchmaker', a protein that promotes the formation of a stable complex between two or more DNA-binding proteins in an ATP-dependent manner without itself being part of a final effector complex. The polypeptide is DNA mismatch repair protein MutL (Xanthomonas oryzae pv. oryzae (strain MAFF 311018)).